The following is a 177-amino-acid chain: MKRIVLLRLGHRPERDKRITTHVGLTARLLGAEGMLLASNDPGIIATLEDVVSRWGGNFYIKNNVNYKQEIKEWKAAGGKVCHLSMYGINLPDVTDELKSCDKLMIVVGAEKVPPEIYQLADWNVAVGSQPHSEVAAVAITLDRIADGEPLKREFQNAELTIVPAERGKQVIENLRD.

Residues L84 and 109–113 (GAEKV) contribute to the S-adenosyl-L-methionine site.

It belongs to the aTrm56 family. In terms of assembly, homodimer.

Its subcellular location is the cytoplasm. The enzyme catalyses cytidine(56) in tRNA + S-adenosyl-L-methionine = 2'-O-methylcytidine(56) in tRNA + S-adenosyl-L-homocysteine + H(+). Its function is as follows. Specifically catalyzes the AdoMet-dependent 2'-O-ribose methylation of cytidine at position 56 in tRNAs. The chain is tRNA (cytidine(56)-2'-O)-methyltransferase from Methanosarcina barkeri (strain Fusaro / DSM 804).